Consider the following 77-residue polypeptide: Beta-defensin 135 (77 aa).

An N-terminal signal peptide occupies residues 1–24 (MATRSVLLALVVLNLLFYVPPGRS). Disulfide bonds link Cys37–Cys64, Cys44–Cys58, and Cys48–Cys65.

This sequence belongs to the beta-defensin family.

It is found in the secreted. Has antibacterial activity. This Homo sapiens (Human) protein is Beta-defensin 135 (DEFB135).